We begin with the raw amino-acid sequence, 465 residues long: Ribulose bisphosphate carboxylase large chain (465 aa).

Residue Lys-4 is modified to N6,N6,N6-trimethyllysine. 2 residues coordinate substrate: Asn-113 and Thr-163. The Proton acceptor role is filled by Lys-165. Lys-167 serves as a coordination point for substrate. 3 residues coordinate Mg(2+): Lys-191, Asp-193, and Glu-194. An N6-carboxylysine modification is found at Lys-191. His-284 serves as the catalytic Proton acceptor. Substrate contacts are provided by Arg-285, His-317, and Ser-369.

The protein belongs to the RuBisCO large chain family. Type I subfamily. Heterohexadecamer of 8 large chains and 8 small chains; disulfide-linked. The disulfide link is formed within the large subunit homodimers. The cofactor is Mg(2+). Post-translationally, the disulfide bond which can form in the large chain dimeric partners within the hexadecamer appears to be associated with oxidative stress and protein turnover.

The protein resides in the plastid. Its subcellular location is the chloroplast. The enzyme catalyses 2 (2R)-3-phosphoglycerate + 2 H(+) = D-ribulose 1,5-bisphosphate + CO2 + H2O. It catalyses the reaction D-ribulose 1,5-bisphosphate + O2 = 2-phosphoglycolate + (2R)-3-phosphoglycerate + 2 H(+). Its function is as follows. RuBisCO catalyzes two reactions: the carboxylation of D-ribulose 1,5-bisphosphate, the primary event in carbon dioxide fixation, as well as the oxidative fragmentation of the pentose substrate in the photorespiration process. Both reactions occur simultaneously and in competition at the same active site. The sequence is that of Ribulose bisphosphate carboxylase large chain from Ulmus alata (Winged elm).